A 779-amino-acid polypeptide reads, in one-letter code: Ribonucleoside-diphosphate reductase large subunit (779 aa).

Residues Ser178, 193–194, Gly222, 420–424, and 614–618 contribute to the substrate site; these read SC, NLCIE, and PTATS. Cys194 and Cys440 are disulfide-bonded. Catalysis depends on Asn420, which acts as the Proton acceptor. Cys422 serves as the catalytic Cysteine radical intermediate. Glu424 acts as the Proton acceptor in catalysis.

Belongs to the ribonucleoside diphosphate reductase large chain family. Heterotetramer composed of a homodimer of the large subunit (R1) and a homodimer of the small subunit (R2). Larger multisubunit protein complex are also active, composed of (R1)n(R2)n.

It catalyses the reaction a 2'-deoxyribonucleoside 5'-diphosphate + [thioredoxin]-disulfide + H2O = a ribonucleoside 5'-diphosphate + [thioredoxin]-dithiol. Under complex allosteric control mediated by deoxynucleoside triphosphates and ATP binding. The type of nucleotide bound at the specificity site determines substrate preference. It seems probable that ATP makes the enzyme reduce CDP and UDP, dGTP favors ADP reduction and dTTP favors GDP reduction. Functionally, ribonucleoside-diphosphate reductase holoenzyme provides the precursors necessary for viral DNA synthesis. Allows virus growth in non-dividing cells. Catalyzes the biosynthesis of deoxyribonucleotides from the corresponding ribonucleotides. This chain is Ribonucleoside-diphosphate reductase large subunit, found in Ornithodoros (relapsing fever ticks).